Consider the following 318-residue polypeptide: MENLNLVSLPHFVNVENLDVEEVEALIKRAEYFKKGGATPRLTTPVYITNMFFEDSSRTHTSFEMAERKLGLIVIPFDPAHSSVNKGETLYDTSLIMDALGVNIEVIRHSRNEYYNDLIDLKEHQHLNMGIINAGDGSGQHPSQCMLDMMTIHEHFGHFKDLKVAIVGDITNSRVAKSDMELLTRLGAKVYFSGPSYWYDKEFDKYGKFEELDKLIPDMDVMMLLRVQHERHADDPNEKAFDAQEYHEKYGINHKRYEELKPDTIIMHPGPINHDVELSGNLVESKKCMFVRQMQNGVFMRMAMIEAVLRGRKLGGLE.

Carbamoyl phosphate is bound by residues Arg-58 and Thr-59. Lys-86 provides a ligand contact to L-aspartate. Residues Arg-108, His-141, and Gln-144 each contribute to the carbamoyl phosphate site. L-aspartate-binding residues include Arg-174 and Arg-226. Gly-270 and Pro-271 together coordinate carbamoyl phosphate.

The protein belongs to the aspartate/ornithine carbamoyltransferase superfamily. ATCase family. As to quaternary structure, heterododecamer (2C3:3R2) of six catalytic PyrB chains organized as two trimers (C3), and six regulatory PyrI chains organized as three dimers (R2).

It carries out the reaction carbamoyl phosphate + L-aspartate = N-carbamoyl-L-aspartate + phosphate + H(+). Its pathway is pyrimidine metabolism; UMP biosynthesis via de novo pathway; (S)-dihydroorotate from bicarbonate: step 2/3. Catalyzes the condensation of carbamoyl phosphate and aspartate to form carbamoyl aspartate and inorganic phosphate, the committed step in the de novo pyrimidine nucleotide biosynthesis pathway. This is Aspartate carbamoyltransferase catalytic subunit from Lactobacillus acidophilus (strain ATCC 700396 / NCK56 / N2 / NCFM).